We begin with the raw amino-acid sequence, 383 residues long: uncharacterized protein (383 aa).

It belongs to the peptidase M20 family.

This is an uncharacterized protein from Staphylococcus aureus (strain N315).